Here is a 227-residue protein sequence, read N- to C-terminus: Cytochrome c oxidase subunit 2 (227 aa).

Residues 1–14 (MAYPVQLGFQDAAS) are Mitochondrial intermembrane-facing. A helical membrane pass occupies residues 15–45 (PIMEELLYFHDHTLMIMFLISSLVLYIISLM). At 46-59 (LTTELMHTNTMDAQ) the chain is on the mitochondrial matrix side. A helical membrane pass occupies residues 60 to 87 (EVETVWTILPAAILILIALPSLRILYMM). Residues 88-227 (DEITTPSLTL…HFEEWLLSML (140 aa)) lie on the Mitochondrial intermembrane side of the membrane. The Cu cation site is built by His-161, Cys-196, Glu-198, Cys-200, His-204, and Met-207. A Mg(2+)-binding site is contributed by Glu-198.

It belongs to the cytochrome c oxidase subunit 2 family. In terms of assembly, component of the cytochrome c oxidase (complex IV, CIV), a multisubunit enzyme composed of 14 subunits. The complex is composed of a catalytic core of 3 subunits MT-CO1, MT-CO2 and MT-CO3, encoded in the mitochondrial DNA, and 11 supernumerary subunits COX4I, COX5A, COX5B, COX6A, COX6B, COX6C, COX7A, COX7B, COX7C, COX8 and NDUFA4, which are encoded in the nuclear genome. The complex exists as a monomer or a dimer and forms supercomplexes (SCs) in the inner mitochondrial membrane with NADH-ubiquinone oxidoreductase (complex I, CI) and ubiquinol-cytochrome c oxidoreductase (cytochrome b-c1 complex, complex III, CIII), resulting in different assemblies (supercomplex SCI(1)III(2)IV(1) and megacomplex MCI(2)III(2)IV(2)). Found in a complex with TMEM177, COA6, COX18, COX20, SCO1 and SCO2. Interacts with TMEM177 in a COX20-dependent manner. Interacts with COX20. Interacts with COX16. It depends on Cu cation as a cofactor.

The protein localises to the mitochondrion inner membrane. It catalyses the reaction 4 Fe(II)-[cytochrome c] + O2 + 8 H(+)(in) = 4 Fe(III)-[cytochrome c] + 2 H2O + 4 H(+)(out). Its function is as follows. Component of the cytochrome c oxidase, the last enzyme in the mitochondrial electron transport chain which drives oxidative phosphorylation. The respiratory chain contains 3 multisubunit complexes succinate dehydrogenase (complex II, CII), ubiquinol-cytochrome c oxidoreductase (cytochrome b-c1 complex, complex III, CIII) and cytochrome c oxidase (complex IV, CIV), that cooperate to transfer electrons derived from NADH and succinate to molecular oxygen, creating an electrochemical gradient over the inner membrane that drives transmembrane transport and the ATP synthase. Cytochrome c oxidase is the component of the respiratory chain that catalyzes the reduction of oxygen to water. Electrons originating from reduced cytochrome c in the intermembrane space (IMS) are transferred via the dinuclear copper A center (CU(A)) of subunit 2 and heme A of subunit 1 to the active site in subunit 1, a binuclear center (BNC) formed by heme A3 and copper B (CU(B)). The BNC reduces molecular oxygen to 2 water molecules using 4 electrons from cytochrome c in the IMS and 4 protons from the mitochondrial matrix. The sequence is that of Cytochrome c oxidase subunit 2 (MT-CO2) from Lemur catta (Ring-tailed lemur).